A 282-amino-acid chain; its full sequence is Digeranylgeranylglyceryl phosphate synthase (282 aa).

The next 9 helical transmembrane spans lie at 15-35 (VIGAALGAIMGFLVSSQWYLE), 36-56 (LKGILLSALVVGLIAAGGYVI), 81-100 (VNKAKALSIALFIIGIALSI), 104-121 (IYALVIALVTAIGLIYYA), 131-151 (GNLLVATTTALSIFYGGLAFF), 159-179 (IIIPTLYAFFLTLIREIVKGI), 201-221 (KSWRIAKILLVLLLIISPLPF), 222-242 (FIGFNLIYLILLILVFIPFTI), and 260-280 (YLKISAISGIIAFLLGSLPFF).

The protein belongs to the UbiA prenyltransferase family. DGGGP synthase subfamily. Requires Mg(2+) as cofactor. It depends on Ca(2+) as a cofactor.

It localises to the cell membrane. It carries out the reaction sn-3-O-(geranylgeranyl)glycerol 1-phosphate + (2E,6E,10E)-geranylgeranyl diphosphate = 2,3-bis-O-(geranylgeranyl)-sn-glycerol 1-phosphate + diphosphate. Its pathway is membrane lipid metabolism; glycerophospholipid metabolism. With respect to regulation, inhibited by EDTA in vitro. Prenyltransferase that catalyzes the transfer of the geranylgeranyl moiety of geranylgeranyl diphosphate (GGPP) to the C2 hydroxyl of (S)-3-O-geranylgeranylglyceryl phosphate (GGGP). This reaction is the second ether-bond-formation step in the biosynthesis of archaeal membrane lipids. Cannot use other prenyl donors, i.e. farnesyl diphosphate (FPP) and phytyl diphosphate. Moreover, 4-hydroxybenzoate, 1,4-dihydroxy 2-naphthoate, homogentisate, and alpha-glycerophosphate do not function as prenyl acceptor substrates. This Saccharolobus solfataricus (strain ATCC 35092 / DSM 1617 / JCM 11322 / P2) (Sulfolobus solfataricus) protein is Digeranylgeranylglyceryl phosphate synthase (ubiA-2).